The primary structure comprises 67 residues: Potassium channel toxin alpha-KTx 6.16 (67 aa).

An N-terminal signal peptide occupies residues 1-24 (MNLKLALVLLLTVINVGMLPGATS). Disulfide bonds link C34-C55, C40-C60, C44-C62, and C50-C65.

The protein belongs to the short scorpion toxin superfamily. Potassium channel inhibitor family. Alpha-KTx 06 subfamily. In terms of tissue distribution, expressed by the venom gland.

The protein localises to the secreted. Its function is as follows. Inhibits voltage-gated potassium channels. The protein is Potassium channel toxin alpha-KTx 6.16 of Opisthacanthus cayaporum (South American scorpion).